The primary structure comprises 510 residues: Bifunctional purine biosynthesis protein PurH (510 aa).

The region spanning 1–145 (MTKRALLSVS…KNFAAVLPIV (145 aa)) is the MGS-like domain.

This sequence belongs to the PurH family.

It carries out the reaction (6R)-10-formyltetrahydrofolate + 5-amino-1-(5-phospho-beta-D-ribosyl)imidazole-4-carboxamide = 5-formamido-1-(5-phospho-D-ribosyl)imidazole-4-carboxamide + (6S)-5,6,7,8-tetrahydrofolate. It catalyses the reaction IMP + H2O = 5-formamido-1-(5-phospho-D-ribosyl)imidazole-4-carboxamide. Its pathway is purine metabolism; IMP biosynthesis via de novo pathway; 5-formamido-1-(5-phospho-D-ribosyl)imidazole-4-carboxamide from 5-amino-1-(5-phospho-D-ribosyl)imidazole-4-carboxamide (10-formyl THF route): step 1/1. It participates in purine metabolism; IMP biosynthesis via de novo pathway; IMP from 5-formamido-1-(5-phospho-D-ribosyl)imidazole-4-carboxamide: step 1/1. This Lactiplantibacillus plantarum (strain ATCC BAA-793 / NCIMB 8826 / WCFS1) (Lactobacillus plantarum) protein is Bifunctional purine biosynthesis protein PurH.